Reading from the N-terminus, the 183-residue chain is Myelin-associated oligodendrocyte basic protein (183 aa).

Residues 68–183 form a disordered region; it reads TRTSRRAKSP…GSPVKASRFW (116 aa). Positions 69-78 are enriched in basic residues; the sequence is RTSRRAKSPQ. A compositionally biased stretch (low complexity) spans 79–96; sequence RPKQQPAAPPAVVRAPAK. 4 repeat units span residues 97-106, 107-116, 117-126, and 127-136. The tract at residues 97–136 is 4 X 10 AA tandem repeats of P-R-S-P-P-R-S-E-R-Q; that stretch reads PRSPPRSERQPRSPPRSERQPRSPPRSERQPRSPPRSERQ. 2 positions are modified to phosphoserine: serine 99 and serine 109. A compositionally biased stretch (basic and acidic residues) spans 101-143; the sequence is PRSERQPRSPPRSERQPRSPPRSERQPRSPPRSERQPRPRPEV. Low complexity predominate over residues 151 to 164; the sequence is RPPQKSKQQPRSSP.

Its subcellular location is the cytoplasm. It is found in the perinuclear region. Its function is as follows. May play a role in compacting or stabilizing the myelin sheath, possibly by binding the negatively charged acidic phospholipids of the cytoplasmic membrane. The polypeptide is Myelin-associated oligodendrocyte basic protein (MOBP) (Homo sapiens (Human)).